A 368-amino-acid chain; its full sequence is MSEFYIGVMSGTSLDGIDLALCEIEDDAFELLLCASYPFDAELKSDILNAINAQTTLKNIGEIDIRLGKMYADALEKFIEENSLKRVKIRAIGLHGQTLWHEPESQNPFSMQLGNANILTARLGICVVSDFRQKDIALGGQGAPFTPAFHEFLFSKLSGNVAVLNIGGMANITLLREMLSGYDTGCGNVLMDYWISKYNGSPYDKDGEWAKSGTPNRELLREFLKEPYFLKSPPKSTGRELFGEKWLKKQLSEFAKKNQNCSYLKARDIQATLLELSVQSIANEIKKSDTTLLIVCGGGINNRYLMERLQEELGDIKIASSDEYGVSSEFMEAMAFAWLAHERIHKKCVKISSVSGALRDSILGAIYE.

11-18 (GTSLDGID) is a binding site for ATP.

This sequence belongs to the anhydro-N-acetylmuramic acid kinase family.

The catalysed reaction is 1,6-anhydro-N-acetyl-beta-muramate + ATP + H2O = N-acetyl-D-muramate 6-phosphate + ADP + H(+). The protein operates within amino-sugar metabolism; 1,6-anhydro-N-acetylmuramate degradation. Its pathway is cell wall biogenesis; peptidoglycan recycling. In terms of biological role, catalyzes the specific phosphorylation of 1,6-anhydro-N-acetylmuramic acid (anhMurNAc) with the simultaneous cleavage of the 1,6-anhydro ring, generating MurNAc-6-P. Is required for the utilization of anhMurNAc either imported from the medium or derived from its own cell wall murein, and thus plays a role in cell wall recycling. This Sulfurimonas denitrificans (strain ATCC 33889 / DSM 1251) (Thiomicrospira denitrificans (strain ATCC 33889 / DSM 1251)) protein is Anhydro-N-acetylmuramic acid kinase.